Here is a 631-residue protein sequence, read N- to C-terminus: MSATKLTRREQRAQAQHFIDTLEGTAFPNSKRIYITGTQPGVRVPMREIQLSPTLIGGSKEQPQYEENEAIPVYDASGPYGDPQIAINVQQGLAKLRQPWIDARGDTEELTVRSSDYTKARLADDGLDELRFSGVLTPKRAKAGRRVTQLHYARRGIITPEMEFIAIRENMGRERIRSEVLRHQHPGMSFGARLPENITAEFVRDEVAAGRAIIPANINHPESEPMIIGRNFLVKVNANIGNSAVTSSIEEEVEKLVWSTRWGADTVMDLSTGRYIHETREWILRNSPVPIGTVPIYQALEKVNGIAEDLTWEAFRDTLLEQAEQGVDYFTIHAGVLLRYVPMTAKRLTGIVSRGGSIMAKWCLSHHQENFLYQHFREICEICAAYDVSLSLGDGLRPGSVQDANDEAQFAELHTLGELTKIAWEYDVQVMIEGPGHVPMQMIRRNMTEELEQCHEAPFYTLGPLTTDIAPGYDHFTSGIGAAMIGWFGCAMLCYVTPKEHLGLPNKEDVKQGLITYKIAAHAADLAKGHPGAQIRDNAMSKARFEFRWEDQFNLALDPFTARAYHDETLPQESGKVAHFCSMCGPKFCSMKISQEVRDYAAAQTIEVGMADMSENFRARGGEIYLRKEEA.

Substrate is bound by residues asparagine 239, methionine 268, tyrosine 297, histidine 333, 353-355, 394-397, and glutamate 433; these read SRG and DGLR. Histidine 437 lines the Zn(2+) pocket. Substrate is bound at residue tyrosine 460. Histidine 501 serves as a coordination point for Zn(2+). [4Fe-4S] cluster is bound by residues cysteine 581, cysteine 584, and cysteine 589.

The protein belongs to the ThiC family. As to quaternary structure, homodimer. [4Fe-4S] cluster is required as a cofactor.

The enzyme catalyses 5-amino-1-(5-phospho-beta-D-ribosyl)imidazole + S-adenosyl-L-methionine = 4-amino-2-methyl-5-(phosphooxymethyl)pyrimidine + CO + 5'-deoxyadenosine + formate + L-methionine + 3 H(+). It functions in the pathway cofactor biosynthesis; thiamine diphosphate biosynthesis. Its function is as follows. Catalyzes the synthesis of the hydroxymethylpyrimidine phosphate (HMP-P) moiety of thiamine from aminoimidazole ribotide (AIR) in a radical S-adenosyl-L-methionine (SAM)-dependent reaction. The protein is Phosphomethylpyrimidine synthase of Escherichia coli (strain SMS-3-5 / SECEC).